A 596-amino-acid chain; its full sequence is Arginine--tRNA ligase (596 aa).

The 'HIGH' region signature appears at 128–138; the sequence is ANPTSSLHVGH.

It belongs to the class-I aminoacyl-tRNA synthetase family. As to quaternary structure, monomer.

The protein resides in the cytoplasm. It carries out the reaction tRNA(Arg) + L-arginine + ATP = L-arginyl-tRNA(Arg) + AMP + diphosphate. The protein is Arginine--tRNA ligase of Acinetobacter baylyi (strain ATCC 33305 / BD413 / ADP1).